The following is a 170-amino-acid chain: Large ribosomal subunit protein uL22z (170 aa).

Belongs to the universal ribosomal protein uL22 family.

This Hordeum vulgare (Barley) protein is Large ribosomal subunit protein uL22z.